Consider the following 142-residue polypeptide: Small ribosomal subunit protein uS9 (142 aa).

Belongs to the universal ribosomal protein uS9 family. As to quaternary structure, component of the small ribosomal subunit (SSU). Mature N.crassa ribosomes consist of a small (40S) and a large (60S) subunit. The 40S small subunit contains 1 molecule of ribosomal RNA (18S rRNA) and at least 32 different proteins. The large 60S subunit contains 3 rRNA molecules (26S, 5.8S and 5S rRNA) and at least 42 different proteins.

It localises to the cytoplasm. Its function is as follows. Component of the ribosome, a large ribonucleoprotein complex responsible for the synthesis of proteins in the cell. The small ribosomal subunit (SSU) binds messenger RNAs (mRNAs) and translates the encoded message by selecting cognate aminoacyl-transfer RNA (tRNA) molecules. The large subunit (LSU) contains the ribosomal catalytic site termed the peptidyl transferase center (PTC), which catalyzes the formation of peptide bonds, thereby polymerizing the amino acids delivered by tRNAs into a polypeptide chain. The nascent polypeptides leave the ribosome through a tunnel in the LSU and interact with protein factors that function in enzymatic processing, targeting, and the membrane insertion of nascent chains at the exit of the ribosomal tunnel. The protein is Small ribosomal subunit protein uS9 (rps-16) of Neurospora crassa (strain ATCC 24698 / 74-OR23-1A / CBS 708.71 / DSM 1257 / FGSC 987).